We begin with the raw amino-acid sequence, 199 residues long: NAD(P)H quinone oxidoreductase PST3 (199 aa).

Residues 5–193 (VAIIIYSLYH…EIAFIQGKSF (189 aa)) enclose the Flavodoxin-like domain. Residues 11-15 (SLYHH) and 111-165 (IFVS…SPYG) contribute to the FMN site.

This sequence belongs to the WrbA family. The cofactor is FMN.

It is found in the cell membrane. It catalyses the reaction a quinone + NADH + H(+) = a quinol + NAD(+). The enzyme catalyses a quinone + NADPH + H(+) = a quinol + NADP(+). In terms of biological role, flavodoxin-like protein (FLP) that plays a role in cell wall integrity, oxidative stress protection and virulence. FLPs act as NAD(P)H quinone oxidoreductases. Reduces ubiquinone (coenzyme Q), enabling it to serve as an antioxidant in the membrane. The polypeptide is NAD(P)H quinone oxidoreductase PST3 (Candida albicans (strain SC5314 / ATCC MYA-2876) (Yeast)).